The primary structure comprises 160 residues: Transcriptional repressor NrdR (160 aa).

A zinc finger spans residues Cys-3–Cys-34. The region spanning Leu-49–Val-139 is the ATP-cone domain.

The protein belongs to the NrdR family. It depends on Zn(2+) as a cofactor.

Functionally, negatively regulates transcription of bacterial ribonucleotide reductase nrd genes and operons by binding to NrdR-boxes. This Exiguobacterium sibiricum (strain DSM 17290 / CCUG 55495 / CIP 109462 / JCM 13490 / 255-15) protein is Transcriptional repressor NrdR.